Consider the following 201-residue polypeptide: Superoxide dismutase [Mn] (201 aa).

4 residues coordinate Mn(2+): His-27, His-81, Asp-163, and His-167.

The protein belongs to the iron/manganese superoxide dismutase family. In terms of assembly, homodimer. Mn(2+) is required as a cofactor.

It localises to the secreted. The catalysed reaction is 2 superoxide + 2 H(+) = H2O2 + O2. Functionally, destroys superoxide anion radicals which are normally produced within the cells and which are toxic to biological systems. The chain is Superoxide dismutase [Mn] (sodA) from Streptococcus pyogenes serotype M18 (strain MGAS8232).